The following is a 377-amino-acid chain: Spermidine/putrescine import ATP-binding protein PotA (377 aa).

Positions 22–252 (VRLQNVTKRF…PANRFVADFI (231 aa)) constitute an ABC transporter domain. 54–61 (GPSGCGKT) lines the ATP pocket.

This sequence belongs to the ABC transporter superfamily. Spermidine/putrescine importer (TC 3.A.1.11.1) family. In terms of assembly, the complex is composed of two ATP-binding proteins (PotA), two transmembrane proteins (PotB and PotC) and a solute-binding protein (PotD).

Its subcellular location is the cell membrane. The catalysed reaction is ATP + H2O + polyamine-[polyamine-binding protein]Side 1 = ADP + phosphate + polyamineSide 2 + [polyamine-binding protein]Side 1.. Part of the ABC transporter complex PotABCD involved in spermidine/putrescine import. Responsible for energy coupling to the transport system. This is Spermidine/putrescine import ATP-binding protein PotA from Rubrobacter xylanophilus (strain DSM 9941 / JCM 11954 / NBRC 16129 / PRD-1).